The sequence spans 352 residues: MKSLVLLVALLLWSSSVPAYPSITVSPDEEQNLNHYIQVLENLVLSVPPKEPGREKKSNSPKHVYSIASKGSKFKELITHGDTSTENDVLTNPISEETTTFPTGDFTPEIGMKKHMESTPFWSIKPNNVSIVLHAEEPYIEKEEPEPEPEPTARQTEAPRTLPVVTESSTSPYVTSYKSPVTTSDRSTGIEISTESEDVPQLSGETAIEKSKELTFGKHPESWNNDDILKKILDINSQVQQALLSDTSNPAYREDIEASKEHLKRSLALAAAAEHKLETMYKSQLLSPGQTSNKIDDIETVINMLCNSRSKLYEYLDIKYVPPEMREEAATVFNTLKNMCRSRRVTALLKVY.

Residues 1–19 form the signal peptide; the sequence is MKSLVLLVALLLWSSSVPA. Residue Asn-128 is glycosylated (N-linked (GlcNAc...) asparagine). The interval 140 to 203 is disordered; sequence IEKEEPEPEP…TESEDVPQLS (64 aa). Residues 166–193 show a composition bias toward polar residues; sequence TESSTSPYVTSYKSPVTTSDRSTGIEIS.

Belongs to the SPESP1 family. Post-translationally, glycosylated. In testis there are two predominant forms of 77- and 67-kDa and a form of 47-kDa, whereas in epididymal sperm from caput, corpus, and cauda there are two forms of 47- and 43-kDa. Testis forms contain complex carbohydrate residues. Epididymal sperm forms are N-glycosylated. Then undergoes significant glycosylation in the testis and that the majority of these glycoconjugates are removed by the time sperm reach the caput epididymis.

It is found in the cytoplasmic vesicle. Its subcellular location is the secretory vesicle. The protein resides in the acrosome. Involved in fertilization ability of sperm. This Macaca fascicularis (Crab-eating macaque) protein is Sperm equatorial segment protein 1.